An 864-amino-acid chain; its full sequence is Protein PAT1 homolog 1 (864 aa).

Over residues 427-439 (PPNSRPNGPQFSG) the composition is skewed to polar residues. 3 disordered regions span residues 427-460 (PPNS…SGMP), 518-539 (WTAH…SRKD), and 551-602 (EMQK…STHN). Basic and acidic residues predominate over residues 551-580 (EMQKERLRDREKERQRERQERIDRGEERKP).

It belongs to the PAT1 family.

The protein resides in the cytoplasm. The protein localises to the P-body. Functionally, RNA-binding protein involved in deadenylation-dependent decapping of mRNAs, leading to the degradation of mRNAs. Acts as a scaffold protein that connects deadenylation and decapping machinery. Required for the recruitment of P-body components such as cgh-1 in somatic blastomeres. May play a role in recruiting the decapping enzyme dcap-1 to cytoplasmic puncta in the cell body of the posterior touch receptor neuron, PLM. The sequence is that of Protein PAT1 homolog 1 (patr-1) from Caenorhabditis briggsae.